The sequence spans 119 residues: Ribonuclease P protein component (119 aa).

The protein belongs to the RnpA family. As to quaternary structure, consists of a catalytic RNA component (M1 or rnpB) and a protein subunit.

It carries out the reaction Endonucleolytic cleavage of RNA, removing 5'-extranucleotides from tRNA precursor.. RNaseP catalyzes the removal of the 5'-leader sequence from pre-tRNA to produce the mature 5'-terminus. It can also cleave other RNA substrates such as 4.5S RNA. The protein component plays an auxiliary but essential role in vivo by binding to the 5'-leader sequence and broadening the substrate specificity of the ribozyme. This chain is Ribonuclease P protein component, found in Proteus mirabilis (strain HI4320).